The primary structure comprises 1025 residues: Multidrug resistance protein MdtC (1025 aa).

Helical transmembrane passes span 3 to 23 (FFAL…AITL), 333 to 353 (EVEQ…FLFL), 360 to 380 (IIPA…MYLC), 387 to 407 (LSLM…IVVL), 431 to 451 (VGFT…PLLL), 463 to 483 (FAVT…TLTP), 528 to 548 (LVGV…ISIP), 853 to 873 (VILI…LYES), 875 to 895 (VHPL…LLAL), 897 to 917 (LFNA…IGIV), 953 to 973 (PIMM…LSGG), and 984 to 1004 (ITIV…TPVV).

This sequence belongs to the resistance-nodulation-cell division (RND) (TC 2.A.6) family. MdtC subfamily. As to quaternary structure, part of a tripartite efflux system composed of MdtA, MdtB and MdtC. MdtC forms a heteromultimer with MdtB.

It localises to the cell inner membrane. Its function is as follows. The MdtABC tripartite complex confers resistance against novobiocin and deoxycholate. The chain is Multidrug resistance protein MdtC from Escherichia coli O7:K1 (strain IAI39 / ExPEC).